The chain runs to 563 residues: Serine palmitoyltransferase 3 (563 aa).

A compositionally biased stretch (polar residues) spans 1 to 29 (MANLNDSAVTNGTLHNPKTQQGKRQSTGC). The interval 1–32 (MANLNDSAVTNGTLHNPKTQQGKRQSTGCVKN) is disordered. The helical transmembrane segment at 59–79 (PLYVYVLTYMGYGIGILFGYL) threads the bilayer. At Lys371 the chain carries N6-(pyridoxal phosphate)lysine.

This sequence belongs to the class-II pyridoxal-phosphate-dependent aminotransferase family. Component of the serine palmitoyltransferase (SPT) complex, which is composed of SPTLC1, SPTLC2 or SPTLC3 and SPTSSA or SPTSSB. The heterodimer consisting of SPTLC1 and SPTLC2/SPTLC3 forms the catalytic core of the enzyme, while SPTSSA or SPTSSB subunits determine substrate specificity. SPT also interacts with ORMDL proteins, especially ORMDL3, which negatively regulate SPT activity in the presence of ceramides. Requires pyridoxal 5'-phosphate as cofactor. In terms of tissue distribution, expressed in white and brown adipose tissues.

It localises to the endoplasmic reticulum membrane. The enzyme catalyses L-serine + hexadecanoyl-CoA + H(+) = 3-oxosphinganine + CO2 + CoA. It carries out the reaction dodecanoyl-CoA + L-serine + H(+) = 3-oxotetradecasphinganine + CO2 + CoA. It catalyses the reaction tetradecanoyl-CoA + L-serine + H(+) = 3-oxohexadecasphinganine + CO2 + CoA. The catalysed reaction is octadecanoyl-CoA + L-serine + H(+) = 3-oxoeicosasphinganine + CO2 + CoA. It functions in the pathway lipid metabolism; sphingolipid metabolism. SPT complex catalytic activity is negatively regulated by ORMDL proteins, including ORMDL3, in the presence of ceramides. This mechanism allows to maintain ceramide levels at sufficient concentrations for the production of complex sphingolipids, but which prevents the accumulation of ceramides to levels that trigger apoptosis. Its function is as follows. Component of the serine palmitoyltransferase multisubunit enzyme (SPT) that catalyzes the initial and rate-limiting step in sphingolipid biosynthesis by condensing L-serine and activated acyl-CoA (most commonly palmitoyl-CoA) to form long-chain bases. The SPT complex is composed of SPTLC1, SPTLC2 or SPTLC3 and SPTSSA or SPTSSB. Within this complex, the heterodimer consisting of SPTLC1 and SPTLC2/SPTLC3 forms the catalytic core. The composition of the serine palmitoyltransferase (SPT) complex determines the substrate preference. The SPTLC1-SPTLC2-SPTSSA complex shows a strong preference for C16-CoA substrate, while the SPTLC1-SPTLC3-SPTSSA isozyme uses both C14-CoA and C16-CoA as substrates, with a slight preference for C14-CoA. The SPTLC1-SPTLC2-SPTSSB complex shows a strong preference for C18-CoA substrate, while the SPTLC1-SPTLC3-SPTSSB isozyme displays an ability to use a broader range of acyl-CoAs, without apparent preference. In Mus musculus (Mouse), this protein is Serine palmitoyltransferase 3.